Here is a 623-residue protein sequence, read N- to C-terminus: Chaperone protein DnaK (623 aa).

Thr175 bears the Phosphothreonine; by autocatalysis mark. Positions 580-623 are disordered; it reads PEGAQGAGFDPNNMGGANAGNASAGNDKKDDNVVDADFKVEDDK. Residues 591-604 are compositionally biased toward low complexity; the sequence is NNMGGANAGNASAG. Basic and acidic residues predominate over residues 605–623; the sequence is NDKKDDNVVDADFKVEDDK.

Belongs to the heat shock protein 70 family.

Functionally, acts as a chaperone. In Clostridium botulinum (strain Hall / ATCC 3502 / NCTC 13319 / Type A), this protein is Chaperone protein DnaK.